The primary structure comprises 627 residues: Membrane protein insertase YidC (627 aa).

6 helical membrane-spanning segments follow: residues 3 to 23 (KNTV…SWLN), 376 to 396 (WGLI…PLAY), 450 to 470 (LPML…PTTI), 502 to 522 (FYGN…ILYI), 534 to 554 (EGMA…LFFF), and 558 to 578 (ASGL…QYMS).

Belongs to the OXA1/ALB3/YidC family. Type 1 subfamily. Interacts with the Sec translocase complex via SecD. Specifically interacts with transmembrane segments of nascent integral membrane proteins during membrane integration.

It is found in the cell inner membrane. Required for the insertion and/or proper folding and/or complex formation of integral membrane proteins into the membrane. Involved in integration of membrane proteins that insert both dependently and independently of the Sec translocase complex, as well as at least some lipoproteins. Aids folding of multispanning membrane proteins. The protein is Membrane protein insertase YidC of Porphyromonas gingivalis (strain ATCC BAA-308 / W83).